The primary structure comprises 423 residues: MATVNGAVGKPQHISKMIESTKMNGNQAQDAAGRADTPVSSDTPDYLHVFDSRTCNIHHIPVSDGFVRGSDLSTIAAPVKGNSGRMQKLAVLDPGFQHTACKESGITFIDGEKGELRYRGVRIEDLFHDHDFDSTLHLLLWGRLPTNDEKIAFERRIFEAATPPQEVCDVIRKLPKNTDFISMFLTGLSTYMGADEEMTRSRHQAVMTYHKNMKATDDAIIRCFAYVSATLATVYCHVKGVELHPPKEGLTLVENFLHMIGMEDPDKKVSRTIDRLSINMADHELSCSTAAFLHVASSLTDPMTCLLTAISAASGPLHGGALEVCYQGLELIGSVENVPAYIAAVKAKKFRLFGYGHRVYKTQDPRAALTKELMEEHREAIAANPLLQIAVEIDRQANTDPYFVERKLKLNADFYGCFVYIAL.

Catalysis depends on residues H357 and D413.

Belongs to the citrate synthase family.

Its pathway is secondary metabolite biosynthesis. Its function is as follows. Citrate synthase-like protein; part of the gene cluster that mediates the biosynthesis of squalestatin S1 (SQS1, also known as zaragozic acid A), a heavily oxidized fungal polyketide that offers potent cholesterol lowering activity by targeting squalene synthase (SS). SQS1 is composed of a 2,8-dioxobicyclic[3.2.1]octane-3,4,5-tricarboxyclic acid core that is connected to two lipophilic polyketide arms. These initial steps feature the priming of an unusual benzoic acid starter unit onto the highly reducing polyketide synthase clz14, followed by oxaloacetate extension and product release to generate a tricarboxylic acid containing product. The phenylalanine ammonia lyase (PAL) clz10 and the acyl-CoA ligase clz12 are involved in transforming phenylalanine into benzoyl-CoA. The citrate synthase-like protein clz17 is involved in connecting the C-alpha-carbons of the hexaketide chain and oxaloacetate to afford the tricarboxylic acid unit. The potential hydrolytic enzymes, clz11 and clz13, are in close proximity to pks2 and may participate in product release. On the other side, the tetraketide arm is synthesized by a the squalestatin tetraketide synthase clz2 and enzymatically esterified to the core in the last biosynthetic step, by the acetyltransferase clz6. The biosynthesis of the tetraketide must involve 3 rounds of chain extension. After the first and second rounds methyl-transfer occurs, and in all rounds of extension the ketoreductase and dehydratase are active. The enoyl reductase and C-MeT of clz2 are not active in the final round of extension. The acetyltransferase clz6 appears to have a broad substrate selectivity for its acyl CoA substrate, allowing the in vitro synthesis of novel squalestatins. The biosynthesis of SQS1 requires several oxidative steps likely performed by oxidoreductases clz3, clz15 and clz16. Finally, in support of the identification of the cluster as being responsible for SQS1 production, the cluster contains a gene encoding a putative squalene synthase (SS) clz20, suggesting a likely mechanism for self-resistance. In Cochliobolus lunatus (Filamentous fungus), this protein is Citrate synthase-like protein clz17.